A 593-amino-acid chain; its full sequence is MEQPEDMASLSEFDSLAGSIPATKVEITVSCRNLLDKDMFSKSDPLCVMYTQGMENKQWREFGRTEVIDNTLNPDFVRKFIVDYFFEEKQNLRFDLYDVDSKSPDLSKHDFLGQAFCTLGEIVGSSGSRLEKPLTIGTFSLNSRTGKPMPAVSNGGVPGKKCGTIILSAEELSNCRDVATMQFCANKLDKKDFFGKSDPFLVFYRSNEDGTFTICHKTEVMKNTLNPVWQTFSIPVRALCNGDYDRTIKVEVYDWDRDGSHDFIGEFTTSYRELARGQSQFNIYEVINPKKKMKKKKYVNSGTVTLLSFAVESESTFLDYIKGGTQINFTVAIDFTASNGNPSQSTSLHYMSPYQLNAYALALTAVGEIIQHYDSDKMFPALGFGAKLPPDGRVSHEFPLNGNQENPSCCGIDGILEAYHSSLRTVQLYGPTNFAPVVTHVARNAAAVQDGSQYSVLLIITDGVISDMAQTKEAIVNAAKLPMSIIIVGVGQAEFDAMVELDGDDVRISSRGKLAERDIVQFVPFRDYVDRTGNHVLSMARLARDVLAEIPDQLVSYMKAQGIRPRPPPAAPAQSPPQSPAHSPPGSPVHTHI.

The C2 1 domain occupies 2–134 (EQPEDMASLS…SSGSRLEKPL (133 aa)). Phosphoserine is present on Ser-19. Ca(2+)-binding residues include Asp-38, Asp-44, Asp-98, Asp-100, Ser-103, Lys-108, and Asp-110. The residue at position 103 (Ser-103) is a Phosphoserine. A Phosphoserine modification is found at Ser-140. Residues 161–284 (KCGTIILSAE…ARGQSQFNIY (124 aa)) enclose the C2 2 domain. Asp-192, Asp-198, Asp-254, Asp-256, and Asp-262 together coordinate Ca(2+). Residues 328–554 (NFTVAIDFTA…DVLAEIPDQL (227 aa)) form the VWFA domain. The disordered stretch occupies residues 562–593 (GIRPRPPPAAPAQSPPQSPAHSPPGSPVHTHI). The segment covering 565–587 (PRPPPAAPAQSPPQSPAHSPPGS) has biased composition (pro residues).

It belongs to the copine family. Ca(2+) is required as a cofactor. Expressed in the cerebra and cerebellum of newborn brain. Expressed in the eye, lung and muscles but weakly expressed in the adult brain (at protein level).

Its subcellular location is the perikaryon. The protein resides in the cell projection. Its function is as follows. Probable calcium-dependent phospholipid-binding protein that may play a role in calcium-mediated intracellular processes. Plays a role in dendrite formation by melanocytes. This Mus musculus (Mouse) protein is Copine-5.